The primary structure comprises 471 residues: Serine/threonine-protein kinase sid1 (471 aa).

The Protein kinase domain occupies 9–260 (YTLLRKLGSG…AKELLQHPFI (252 aa)). Residues 15–23 (LGSGSFGVV) and Lys-38 each bind ATP. The active-site Proton acceptor is Asp-129.

It belongs to the protein kinase superfamily. STE Ser/Thr protein kinase family. STE20 subfamily. In terms of assembly, interacts with cdc14.

It is found in the cytoplasm. It localises to the cytoskeleton. Its subcellular location is the microtubule organizing center. The protein resides in the spindle pole body. The enzyme catalyses L-seryl-[protein] + ATP = O-phospho-L-seryl-[protein] + ADP + H(+). It catalyses the reaction L-threonyl-[protein] + ATP = O-phospho-L-threonyl-[protein] + ADP + H(+). Its function is as follows. Has a role in the septation initiation network (SIN) required for cytokinesis. The polypeptide is Serine/threonine-protein kinase sid1 (sid1) (Schizosaccharomyces pombe (strain 972 / ATCC 24843) (Fission yeast)).